Consider the following 538-residue polypeptide: Chaperonin GroEL 1 (538 aa).

Residues 29 to 32 (TLGP), 86 to 90 (DGTTT), glycine 413, and aspartate 494 contribute to the ATP site.

This sequence belongs to the chaperonin (HSP60) family. As to quaternary structure, forms a cylinder of 14 subunits composed of two heptameric rings stacked back-to-back. Interacts with the co-chaperonin GroES.

Its subcellular location is the cytoplasm. The catalysed reaction is ATP + H2O + a folded polypeptide = ADP + phosphate + an unfolded polypeptide.. Together with its co-chaperonin GroES, plays an essential role in assisting protein folding. The GroEL-GroES system forms a nano-cage that allows encapsulation of the non-native substrate proteins and provides a physical environment optimized to promote and accelerate protein folding. The chain is Chaperonin GroEL 1 from Mycobacterium avium (strain 104).